Here is a 212-residue protein sequence, read N- to C-terminus: Glycerol-3-phosphate acyltransferase (212 aa).

A run of 5 helical transmembrane segments spans residues 3–23 (LILL…LWIG), 69–89 (LLPM…FFAI), 110–130 (AGIL…IFFF), 143–163 (VIAA…HFLL), and 165–185 (DYDF…IIRH).

Belongs to the PlsY family. Probably interacts with PlsX.

It localises to the cell membrane. The enzyme catalyses an acyl phosphate + sn-glycerol 3-phosphate = a 1-acyl-sn-glycero-3-phosphate + phosphate. It functions in the pathway lipid metabolism; phospholipid metabolism. Catalyzes the transfer of an acyl group from acyl-phosphate (acyl-PO(4)) to glycerol-3-phosphate (G3P) to form lysophosphatidic acid (LPA). This enzyme utilizes acyl-phosphate as fatty acyl donor, but not acyl-CoA or acyl-ACP. The polypeptide is Glycerol-3-phosphate acyltransferase (Streptococcus mutans serotype c (strain ATCC 700610 / UA159)).